The following is a 105-amino-acid chain: Large ribosomal subunit protein uL24 (105 aa).

This sequence belongs to the universal ribosomal protein uL24 family. Part of the 50S ribosomal subunit.

Its function is as follows. One of two assembly initiator proteins, it binds directly to the 5'-end of the 23S rRNA, where it nucleates assembly of the 50S subunit. One of the proteins that surrounds the polypeptide exit tunnel on the outside of the subunit. The chain is Large ribosomal subunit protein uL24 from Hahella chejuensis (strain KCTC 2396).